Reading from the N-terminus, the 106-residue chain is Cell division protein FtsL (106 aa).

Residues 1–22 (MPRQSPPNLAKLIALDLLTVGR) lie on the Cytoplasmic side of the membrane. Residues 23-43 (VPLLLLVLIFSCAMGVVFMTH) traverse the membrane as a helical segment. The Periplasmic portion of the chain corresponds to 44–106 (HTRQAISAKD…SDKEVVINLK (63 aa)).

This sequence belongs to the FtsL family. In terms of assembly, part of a complex composed of FtsB, FtsL and FtsQ.

Its subcellular location is the cell inner membrane. In terms of biological role, essential cell division protein. May link together the upstream cell division proteins, which are predominantly cytoplasmic, with the downstream cell division proteins, which are predominantly periplasmic. The protein is Cell division protein FtsL of Vibrio cholerae serotype O1 (strain ATCC 39315 / El Tor Inaba N16961).